The sequence spans 422 residues: Probable metallocarboxypeptidase A (422 aa).

Positions 1-17 (MRSVLSLALLAVNVVTA) are cleaved as a signal peptide. A propeptide spans 18 to 112 (AVVAPFDYSG…FEAYSAGYAP (95 aa)) (activation peptide). The Peptidase M14 domain occupies 119–419 (SYHSYQDHLS…AGTVAMLKAV (301 aa)). The Zn(2+) site is built by H179 and E182. Substrate is bound by residues 179-182 (HARE), R237, and 254-255 (NR). A disulfide bridge links C248 with C271. Zn(2+) is bound at residue H309. Substrate is bound at residue 310 to 311 (SY). E385 (proton donor/acceptor) is an active-site residue.

Belongs to the peptidase M14 family. Requires Zn(2+) as cofactor.

The protein resides in the secreted. Its function is as follows. Extracellular metalloprotease that contributes to pathogenicity. The chain is Probable metallocarboxypeptidase A (MCPA) from Trichophyton verrucosum (strain HKI 0517).